A 353-amino-acid polypeptide reads, in one-letter code: UPF0283 membrane protein YPA_1696 (353 aa).

The next 3 membrane-spanning stretches (helical) occupy residues 71–91 (MVTA…VQWV), 101–121 (IALG…GSVV), and 214–234 (ESAL…FIAW).

It belongs to the UPF0283 family.

Its subcellular location is the cell inner membrane. This chain is UPF0283 membrane protein YPA_1696, found in Yersinia pestis bv. Antiqua (strain Antiqua).